Consider the following 332-residue polypeptide: Anthranilate phosphoribosyltransferase (332 aa).

5-phospho-alpha-D-ribose 1-diphosphate-binding positions include G78, 81 to 82, S86, 88 to 91, 106 to 114, and S118; these read GD, NIST, and KHGNKSITS. G78 serves as a coordination point for anthranilate. Position 90 (S90) interacts with Mg(2+). N109 contacts anthranilate. R163 provides a ligand contact to anthranilate. Positions 222 and 223 each coordinate Mg(2+).

This sequence belongs to the anthranilate phosphoribosyltransferase family. Homodimer. Mg(2+) is required as a cofactor.

It catalyses the reaction N-(5-phospho-beta-D-ribosyl)anthranilate + diphosphate = 5-phospho-alpha-D-ribose 1-diphosphate + anthranilate. Its pathway is amino-acid biosynthesis; L-tryptophan biosynthesis; L-tryptophan from chorismate: step 2/5. In terms of biological role, catalyzes the transfer of the phosphoribosyl group of 5-phosphorylribose-1-pyrophosphate (PRPP) to anthranilate to yield N-(5'-phosphoribosyl)-anthranilate (PRA). This chain is Anthranilate phosphoribosyltransferase, found in Staphylococcus aureus (strain USA300).